A 154-amino-acid chain; its full sequence is Protein X (154 aa).

A mitochondrial targeting sequence region spans residues 68–117; the sequence is PCALRFTSARRMETTVNTHMILPKVLHKRTLGLPAMSTIDLEAYFKDCLF.

Belongs to the orthohepadnavirus protein X family. In terms of assembly, may form homodimer. May interact with host CEBPA, CFLAR, CREB1, DDB1, E4F1, HBXIP, HSPD1/HSP60, NFKBIA, POLR2E and SMAD4. Interacts with host SMC5-SMC6 complex and induces its degradation. Interacts with host TRPC4AP; leading to prevent ubiquitination of TRPC4AP. Interacts with host PLSCR1; this interaction promotes ubiquitination and degradation of HBx and impairs HBx-mediated cell proliferation. In terms of processing, a fraction may be phosphorylated in insect cells and HepG2 cells, a human hepatoblastoma cell line. Phosphorylated in vitro by host protein kinase C or mitogen-activated protein kinase. N-acetylated in insect cells.

Its subcellular location is the host cytoplasm. It is found in the host nucleus. The protein localises to the host mitochondrion. In terms of biological role, multifunctional protein that plays a role in silencing host antiviral defenses and promoting viral transcription. Does not seem to be essential for HBV infection. May be directly involved in development of cirrhosis and liver cancer (hepatocellular carcinoma). Most of cytosolic activities involve modulation of cytosolic calcium. The effect on apoptosis is controversial depending on the cell types in which the studies have been conducted. May induce apoptosis by localizing in mitochondria and causing loss of mitochondrial membrane potential. May also modulate apoptosis by binding host CFLAR, a key regulator of the death-inducing signaling complex (DISC). Promotes viral transcription by using the host E3 ubiquitin ligase DDB1 to target the SMC5-SMC6 complex to proteasomal degradation. This host complex would otherwise bind to viral episomal DNA, and prevents its transcription. Moderately stimulates transcription of many different viral and cellular transcription elements. Promoters and enhancers stimulated by HBx contain DNA binding sites for NF-kappa-B, AP-1, AP-2, c-EBP, ATF/CREB, or the calcium-activated factor NF-AT. This chain is Protein X, found in Hepatitis B virus genotype C subtype ayw (isolate Australia/AustRC/1992) (HBV-C).